Here is a 412-residue protein sequence, read N- to C-terminus: Class E basic helix-loop-helix protein 40 (412 aa).

The segment at 1–139 is essential for interaction with BMAL1, E-box binding and repressor activity against the CLOCK-BMAL1 heterodimer; sequence MERIPSAQPP…LSGRNVETGQ (139 aa). A bHLH domain is found at 52–107; it reads TYKLPHRLIEKKRRDRINECIAQLKDLLPEHLKLTTLGHLEKAVVLELTLKHVKAL. Positions 75–79 are necessary for interaction with RXRA and repressor activity against RXRA; the sequence is LKDLL. The region spanning 142–175 is the Orange domain; sequence FCSGFQTCAREVLQYLAKHENTRDLKSSQLVTHL. Lys-159 is covalently cross-linked (Glycyl lysine isopeptide (Lys-Gly) (interchain with G-Cter in SUMO1, SUMO2 and SUMO3)). Lys-167 is covalently cross-linked (Glycyl lysine isopeptide (Lys-Gly) (interchain with G-Cter in SUMO2)). 2 disordered regions span residues 183–259 and 275–309; these read LQGG…SEQL and IGAIKQESEEPPTKKNRMQLSDDEGHFTSSDLISS. Residue Ser-235 is modified to Phosphoserine. A compositionally biased stretch (basic and acidic residues) spans 248-259; it reads ESEKGDLRSEQL. Residue Lys-279 forms a Glycyl lysine isopeptide (Lys-Gly) (interchain with G-Cter in SUMO1); alternate linkage. Lys-279 participates in a covalent cross-link: Glycyl lysine isopeptide (Lys-Gly) (interchain with G-Cter in SUMO1, SUMO2 and SUMO3); alternate. Lys-279 participates in a covalent cross-link: Glycyl lysine isopeptide (Lys-Gly) (interchain with G-Cter in SUMO2); alternate. Residue Lys-288 forms a Glycyl lysine isopeptide (Lys-Gly) (interchain with G-Cter in SUMO2) linkage. The residue at position 383 (Ser-383) is a Phosphoserine.

Homodimer. Heterodimer with BHLHE41/DEC2. Interacts with TCF3/E47. Interacts with ubiquitin-conjugating enzyme UBE2I/UBC9. Interacts with HDAC1, SUMO1, RXRA and BMAL1. Post-translationally, ubiquitinated; which may lead to proteasomal degradation. Sumoylation inhibits its ubiquitination and promotes its negative regulation of the CLOCK-BMAL1 heterodimer transcriptional activator activity.

It localises to the cytoplasm. It is found in the nucleus. Transcriptional repressor involved in the regulation of the circadian rhythm by negatively regulating the activity of the clock genes and clock-controlled genes. Acts as the negative limb of a novel autoregulatory feedback loop (DEC loop) which differs from the one formed by the PER and CRY transcriptional repressors (PER/CRY loop). Both these loops are interlocked as it represses the expression of PER1/2 and in turn is repressed by PER1/2 and CRY1/2. Represses the activity of the circadian transcriptional activator: CLOCK-BMAL1|BMAL2 heterodimer by competing for the binding to E-box elements (5'-CACGTG-3') found within the promoters of its target genes. Negatively regulates its own expression and the expression of DBP and BHLHE41/DEC2. Acts as a corepressor of RXR and the RXR-LXR heterodimers and represses the ligand-induced RXRA and NR1H3/LXRA transactivation activity. May be involved in the regulation of chondrocyte differentiation via the cAMP pathway. Represses the transcription of NR0B2 and attentuates the transactivation of NR0B2 by the CLOCK-BMAL1 complex. Drives the circadian rhythm of blood pressure through transcriptional repression of ATP1B1 in the cardiovascular system. The chain is Class E basic helix-loop-helix protein 40 (BHLHE40) from Pongo abelii (Sumatran orangutan).